A 271-amino-acid chain; its full sequence is Pyrroline-5-carboxylate reductase (271 aa).

Belongs to the pyrroline-5-carboxylate reductase family.

The protein localises to the cytoplasm. It carries out the reaction L-proline + NADP(+) = (S)-1-pyrroline-5-carboxylate + NADPH + 2 H(+). The enzyme catalyses L-proline + NAD(+) = (S)-1-pyrroline-5-carboxylate + NADH + 2 H(+). It participates in amino-acid biosynthesis; L-proline biosynthesis; L-proline from L-glutamate 5-semialdehyde: step 1/1. Catalyzes the reduction of 1-pyrroline-5-carboxylate (PCA) to L-proline. This is Pyrroline-5-carboxylate reductase from Staphylococcus aureus (strain Mu50 / ATCC 700699).